A 477-amino-acid polypeptide reads, in one-letter code: Ribulose bisphosphate carboxylase large chain (477 aa).

Residues 1 to 2 (MS) constitute a propeptide that is removed on maturation. Pro3 is modified (N-acetylproline). N6,N6,N6-trimethyllysine is present on Lys14. Asn123 and Thr173 together coordinate substrate. The Proton acceptor role is filled by Lys175. A substrate-binding site is contributed by Lys177. Lys201, Asp203, and Glu204 together coordinate Mg(2+). Position 201 is an N6-carboxylysine (Lys201). Catalysis depends on His294, which acts as the Proton acceptor. Residues Arg295, His327, and Ser379 each contribute to the substrate site.

It belongs to the RuBisCO large chain family. Type I subfamily. As to quaternary structure, heterohexadecamer of 8 large chains and 8 small chains; disulfide-linked. The disulfide link is formed within the large subunit homodimers. Mg(2+) is required as a cofactor. In terms of processing, the disulfide bond which can form in the large chain dimeric partners within the hexadecamer appears to be associated with oxidative stress and protein turnover.

It is found in the plastid. The protein resides in the chloroplast. It catalyses the reaction 2 (2R)-3-phosphoglycerate + 2 H(+) = D-ribulose 1,5-bisphosphate + CO2 + H2O. The catalysed reaction is D-ribulose 1,5-bisphosphate + O2 = 2-phosphoglycolate + (2R)-3-phosphoglycerate + 2 H(+). Functionally, ruBisCO catalyzes two reactions: the carboxylation of D-ribulose 1,5-bisphosphate, the primary event in carbon dioxide fixation, as well as the oxidative fragmentation of the pentose substrate in the photorespiration process. Both reactions occur simultaneously and in competition at the same active site. This is Ribulose bisphosphate carboxylase large chain from Hyophorbe lagenicaulis (Bottle palm).